The chain runs to 1747 residues: Retroelement silencing factor 1 (1747 aa).

K216 is covalently cross-linked (Glycyl lysine isopeptide (Lys-Gly) (interchain with G-Cter in SUMO2)). S221 carries the post-translational modification Phosphoserine. The segment covering T261–Q272 has biased composition (polar residues). Positions T261 to P280 are disordered. K707 participates in a covalent cross-link: Glycyl lysine isopeptide (Lys-Gly) (interchain with G-Cter in SUMO2). Disordered stretches follow at residues P833–Q856, P923–K956, and E1073–A1101. Positions E842–Q856 are enriched in polar residues. Positions R937–K956 are enriched in basic and acidic residues. A compositionally biased stretch (polar residues) spans E1073–D1087. Positions T1089 to A1101 are enriched in basic and acidic residues. K1136 is covalently cross-linked (Glycyl lysine isopeptide (Lys-Gly) (interchain with G-Cter in SUMO2)). S1145 is modified (phosphoserine). The segment at E1200 to L1274 is disordered. The segment covering Q1217 to V1226 has biased composition (basic and acidic residues). At T1240 the chain carries Phosphothreonine. Basic and acidic residues predominate over residues P1242–K1261. Residue S1358 is modified to Phosphoserine. Glycyl lysine isopeptide (Lys-Gly) (interchain with G-Cter in SUMO2) cross-links involve residues K1528 and K1636. Residues K1686 to Q1716 are disordered. Positions Q1689–V1698 are enriched in basic and acidic residues. S1708 is modified (phosphoserine). Residue K1723 forms a Glycyl lysine isopeptide (Lys-Gly) (interchain with G-Cter in SUMO2) linkage. S1740 carries the phosphoserine modification.

As to quaternary structure, interacts with SETDB1.

The protein localises to the nucleus. Its function is as follows. Plays a role in the regulation of imprinted gene expression, regulates repressive epigenetic modifications associated with SETDB1. Required for the recruitment or accumulation of SETDB1 to the endogenous retroviruses (ERVs) and maintenance of repressive chromatin configuration, contributing to a subset of the SETDB1-dependent ERV silencing in embryonic stem cells. This chain is Retroelement silencing factor 1, found in Homo sapiens (Human).